Reading from the N-terminus, the 105-residue chain is Integration host factor subunit alpha (105 aa).

It belongs to the bacterial histone-like protein family. As to quaternary structure, heterodimer of an alpha and a beta chain.

In terms of biological role, this protein is one of the two subunits of integration host factor, a specific DNA-binding protein that functions in genetic recombination as well as in transcriptional and translational control. The protein is Integration host factor subunit alpha of Xanthobacter autotrophicus (strain ATCC BAA-1158 / Py2).